The following is a 125-amino-acid chain: uncharacterized protein (125 aa).

The tract at residues 50–73 (QTSDFSDESSRSDSSSVTNENEVS) is disordered.

This is an uncharacterized protein from Microplitis demolitor (Parasitoid wasp).